A 179-amino-acid chain; its full sequence is Large ribosomal subunit protein uL5 (179 aa).

The protein belongs to the universal ribosomal protein uL5 family. Part of the 50S ribosomal subunit; part of the 5S rRNA/L5/L18/L25 subcomplex. Contacts the 5S rRNA and the P site tRNA. Forms a bridge to the 30S subunit in the 70S ribosome.

In terms of biological role, this is one of the proteins that bind and probably mediate the attachment of the 5S RNA into the large ribosomal subunit, where it forms part of the central protuberance. In the 70S ribosome it contacts protein S13 of the 30S subunit (bridge B1b), connecting the 2 subunits; this bridge is implicated in subunit movement. Contacts the P site tRNA; the 5S rRNA and some of its associated proteins might help stabilize positioning of ribosome-bound tRNAs. The protein is Large ribosomal subunit protein uL5 of Yersinia enterocolitica serotype O:8 / biotype 1B (strain NCTC 13174 / 8081).